A 465-amino-acid chain; its full sequence is tRNA modification GTPase MnmE (465 aa).

Residues Arg-21, Glu-85, and Lys-124 each contribute to the (6S)-5-formyl-5,6,7,8-tetrahydrofolate site. Residues 220–387 enclose the TrmE-type G domain; that stretch reads GVPVAIIGET…LQQRLVAAAH (168 aa). K(+) is bound at residue Asn-230. GTP-binding positions include 230 to 235, 249 to 255, and 274 to 277; these read NAGKST, SDIHGTT, and DTAG. A Mg(2+)-binding site is contributed by Ser-234. Ser-249, Ile-251, and Thr-254 together coordinate K(+). Thr-255 is a Mg(2+) binding site. Lys-465 is a (6S)-5-formyl-5,6,7,8-tetrahydrofolate binding site.

It belongs to the TRAFAC class TrmE-Era-EngA-EngB-Septin-like GTPase superfamily. TrmE GTPase family. Homodimer. Heterotetramer of two MnmE and two MnmG subunits. Requires K(+) as cofactor.

It localises to the cytoplasm. Functionally, exhibits a very high intrinsic GTPase hydrolysis rate. Involved in the addition of a carboxymethylaminomethyl (cmnm) group at the wobble position (U34) of certain tRNAs, forming tRNA-cmnm(5)s(2)U34. This is tRNA modification GTPase MnmE from Bacteroides fragilis (strain YCH46).